The chain runs to 272 residues: Tryptophan synthase alpha chain (272 aa).

Catalysis depends on proton acceptor residues Glu-49 and Asp-60.

Belongs to the TrpA family. In terms of assembly, tetramer of two alpha and two beta chains.

It carries out the reaction (1S,2R)-1-C-(indol-3-yl)glycerol 3-phosphate + L-serine = D-glyceraldehyde 3-phosphate + L-tryptophan + H2O. Its pathway is amino-acid biosynthesis; L-tryptophan biosynthesis; L-tryptophan from chorismate: step 5/5. The alpha subunit is responsible for the aldol cleavage of indoleglycerol phosphate to indole and glyceraldehyde 3-phosphate. The polypeptide is Tryptophan synthase alpha chain (Methylibium petroleiphilum (strain ATCC BAA-1232 / LMG 22953 / PM1)).